We begin with the raw amino-acid sequence, 323 residues long: Mortality factor 4-like protein 1 (323 aa).

One can recognise a Tudor-knot domain in the interval Gln-12 to Val-62. Positions Gln-77–Thr-143 are disordered. A sufficient for interaction with SIN3A region spans residues Pro-94–Val-227. Lys-104 carries the N6-acetyllysine modification. The tract at residues Ser-125 to Asp-191 is interaction with RB1-1. The sufficient for interaction with PHF12 stretch occupies residues Thr-149–Ala-303. Residues Asn-152–Val-323 enclose the MRG domain. Residues Leu-284–Leu-305 form an interaction with RB1-2 region.

As to quaternary structure, component of the NuA4 histone acetyltransferase complex which contains the catalytic subunit KAT5/TIP60 and the subunits EP400, TRRAP/PAF400, BRD8/SMAP, EPC1, DMAP1/DNMAP1, RUVBL1/TIP49, RUVBL2, ING3, actin, ACTL6A/BAF53A, MORF4L1/MRG15, MORF4L2/MRGX, MRGBP, YEATS4/GAS41, VPS72/YL1 and MEAF6. The NuA4 complex interacts with MYC and the adenovirus E1A protein. MORF4L1 may also participate in the formation of NuA4 related complexes which lack the KAT5/TIP60 catalytic subunit, but which include the SWI/SNF related protein SRCAP. Component of the mSin3A histone deacetylase complex, which includes SIN3A, HDAC2, ARID4B, MORF4L1, RBBP4/RbAp48, and RBBP7/RbAp46. May also interact with PHF12 and one or more as yet undefined members of the TLE (transducin-like enhancer of split) family of transcriptional repressors. Component of the SIN3B complex, which includes SIN3B, HDAC2 or HDAC1, PHF12 and MORF4L1. Interacts with RB1 and KAT8. Interacts with the N-terminus of MRFAP1. Found in a complex composed of MORF4L1, MRFAP1 and RB1. Interacts with the entire BRCA complex, which contains BRCA1, PALB2, BRCA2 and RAD51. Interacts with PALB2. Forms a complex with MSL1 and NUPR1.

The protein localises to the nucleus. In terms of biological role, component of the NuA4 histone acetyltransferase (HAT) complex which is involved in transcriptional activation of select genes principally by acetylation of nucleosomal histones H4 and H2A. This modification may both alter nucleosome - DNA interactions and promote interaction of the modified histones with other proteins which positively regulate transcription. This complex may be required for the activation of transcriptional programs associated with oncogene and proto-oncogene mediated growth induction, tumor suppressor mediated growth arrest and replicative senescence, apoptosis, and DNA repair. The NuA4 complex ATPase and helicase activities seem to be, at least in part, contributed by the association of RUVBL1 and RUVBL2 with EP400. NuA4 may also play a direct role in DNA repair when directly recruited to sites of DNA damage. As part of the SIN3B complex represses transcription and counteracts the histone acetyltransferase activity of EP300 through the recognition H3K27ac marks by PHF12 and the activity of the histone deacetylase HDAC2. SIN3B complex is recruited downstream of the constitutively active genes transcriptional start sites through interaction with histones and mitigates histone acetylation and RNA polymerase II progression within transcribed regions contributing to the regulation of transcription. Required for homologous recombination repair (HRR) and resistance to mitomycin C (MMC). Involved in the localization of PALB2, BRCA2 and RAD51, but not BRCA1, to DNA-damage foci. This is Mortality factor 4-like protein 1 (Morf4l1) from Rattus norvegicus (Rat).